The chain runs to 1172 residues: Pesticidal crystal protein Cry1Ha (1172 aa).

It belongs to the delta endotoxin family.

Functionally, promotes colloidosmotic lysis by binding to the midgut epithelial cells of insects. The chain is Pesticidal crystal protein Cry1Ha (cry1Ha) from Bacillus thuringiensis.